Reading from the N-terminus, the 88-residue chain is Large ribosomal subunit protein bL31B (88 aa).

It belongs to the bacterial ribosomal protein bL31 family. Type B subfamily. In terms of assembly, part of the 50S ribosomal subunit.

The protein is Large ribosomal subunit protein bL31B of Corynebacterium diphtheriae (strain ATCC 700971 / NCTC 13129 / Biotype gravis).